The primary structure comprises 322 residues: Phosphatidylserine decarboxylase proenzyme (322 aa).

Active-site charge relay system; for autoendoproteolytic cleavage activity residues include Asp-90, His-147, and Ser-254. Ser-254 acts as the Schiff-base intermediate with substrate; via pyruvic acid; for decarboxylase activity in catalysis. Ser-254 carries the post-translational modification Pyruvic acid (Ser); by autocatalysis. Residues 294–322 form a disordered region; that stretch reads EAEPAPLPEEEINAEHDASPLVDDKKDES. Residues 306–322 show a composition bias toward basic and acidic residues; that stretch reads NAEHDASPLVDDKKDES.

The protein belongs to the phosphatidylserine decarboxylase family. PSD-B subfamily. Prokaryotic type I sub-subfamily. Heterodimer of a large membrane-associated beta subunit and a small pyruvoyl-containing alpha subunit. It depends on pyruvate as a cofactor. Post-translationally, is synthesized initially as an inactive proenzyme. Formation of the active enzyme involves a self-maturation process in which the active site pyruvoyl group is generated from an internal serine residue via an autocatalytic post-translational modification. Two non-identical subunits are generated from the proenzyme in this reaction, and the pyruvate is formed at the N-terminus of the alpha chain, which is derived from the carboxyl end of the proenzyme. The autoendoproteolytic cleavage occurs by a canonical serine protease mechanism, in which the side chain hydroxyl group of the serine supplies its oxygen atom to form the C-terminus of the beta chain, while the remainder of the serine residue undergoes an oxidative deamination to produce ammonia and the pyruvoyl prosthetic group on the alpha chain. During this reaction, the Ser that is part of the protease active site of the proenzyme becomes the pyruvoyl prosthetic group, which constitutes an essential element of the active site of the mature decarboxylase.

It is found in the cell membrane. The catalysed reaction is a 1,2-diacyl-sn-glycero-3-phospho-L-serine + H(+) = a 1,2-diacyl-sn-glycero-3-phosphoethanolamine + CO2. The protein operates within phospholipid metabolism; phosphatidylethanolamine biosynthesis; phosphatidylethanolamine from CDP-diacylglycerol: step 2/2. Its function is as follows. Catalyzes the formation of phosphatidylethanolamine (PtdEtn) from phosphatidylserine (PtdSer). The protein is Phosphatidylserine decarboxylase proenzyme of Citrobacter koseri (strain ATCC BAA-895 / CDC 4225-83 / SGSC4696).